Consider the following 201-residue polypeptide: Small ribosomal subunit protein uS4 (201 aa).

Positions 91–157 constitute an S4 RNA-binding domain; that stretch reads SRLDNVVYRA…VPFQIARETA (67 aa).

Belongs to the universal ribosomal protein uS4 family. Part of the 30S ribosomal subunit. Contacts protein S5. The interaction surface between S4 and S5 is involved in control of translational fidelity.

In terms of biological role, one of the primary rRNA binding proteins, it binds directly to 16S rRNA where it nucleates assembly of the body of the 30S subunit. With S5 and S12 plays an important role in translational accuracy. The chain is Small ribosomal subunit protein uS4 from Mycolicibacterium paratuberculosis (strain ATCC BAA-968 / K-10) (Mycobacterium paratuberculosis).